The following is a 543-amino-acid chain: Vibriobactin-specific 2,3-dihydroxybenzoate-AMP ligase (543 aa).

Residues F240 to L259 traverse the membrane as a helical segment.

Belongs to the ATP-dependent AMP-binding enzyme family.

The protein localises to the cell inner membrane. The enzyme catalyses 2,3-dihydroxybenzoate + holo-[ACP] + ATP = 2,3-dihydroxybenzoyl-[ACP] + AMP + diphosphate. Its pathway is siderophore biosynthesis; vibriobactin biosynthesis. Functionally, activation of the carboxylate group of 2,3-dihydroxy-benzoate (DHB), via ATP-dependent PPi exchange reactions, to the acyladenylate, preparing that molecule for the final stages of vibriobactin synthesis. The protein is Vibriobactin-specific 2,3-dihydroxybenzoate-AMP ligase (vibE) of Vibrio cholerae serotype O1 (strain ATCC 39315 / El Tor Inaba N16961).